A 322-amino-acid polypeptide reads, in one-letter code: 8-oxo-(d)GTP phosphatase (322 aa).

The disordered stretch occupies residues 1–21 (MMPVDDLQEIPLSKDTTEKSK). The Nudix hydrolase domain occupies 22–156 (HTVRAAGAVL…DDRKVLRRFV (135 aa)). Residues 55–58 (RPRY), Asp-60, and 65–67 (KGK) contribute to the substrate site. Residues Lys-65, Glu-81, and Glu-85 each coordinate Mg(2+). The Nudix box signature appears at 66 to 87 (GKLDQGETEPVAAAREIHEETG). Residues Tyr-101, Lys-108, Glu-127, and Tyr-145 each contribute to the substrate site. Glu-127 contributes to the Mg(2+) binding site.

It belongs to the Nudix hydrolase family. Forms head-to-tail homodimers. Mg(2+) serves as cofactor.

The catalysed reaction is 8-oxo-dGTP + H2O = 8-oxo-dGDP + phosphate + H(+). The enzyme catalyses 8-oxo-GTP + H2O = 8-oxo-GDP + phosphate + H(+). It carries out the reaction 8-oxo-dGDP + H2O = 8-oxo-dGMP + phosphate + H(+). It catalyses the reaction 8-oxo-GDP + H2O = 8-oxo-GMP + phosphate + H(+). The catalysed reaction is P(1),P(6)-bis(5'-adenosyl) hexaphosphate + H2O = 2 ATP + 2 H(+). The enzyme catalyses P(1),P(5)-bis(5'-adenosyl) pentaphosphate + H2O = ADP + ATP + 2 H(+). It carries out the reaction P(1),P(4)-bis(5'-adenosyl) tetraphosphate + H2O = AMP + ATP + 2 H(+). Ap4A hydrolysis is inhibited by fluoride ions. Functionally, catalyzes the conversion of 8-oxo-dGTP to 8-oxo-dGDP, and 8-oxo-GTP to 8-oxo-GDP. At high enzyme concentrations, can also catalyze the conversion of 8-oxo-dGDP to 8-oxo-dGMP, and 8-oxo-GDP to 8-oxo-GMP. In addition, catalyzes the hydrolysis of the diadenosine polyphosphates diadenosine hexaphosphate (Ap6A), diadenosine pentaphosphate (Ap5A) and diadenosine tetraphosphate (Ap4A). The polypeptide is 8-oxo-(d)GTP phosphatase (Mycolicibacterium smegmatis (strain ATCC 700084 / mc(2)155) (Mycobacterium smegmatis)).